Reading from the N-terminus, the 217-residue chain is Small ribosomal subunit protein uS3 (217 aa).

Residues 40–110 (IRDLINNSFN…EVYINIHEVR (71 aa)) enclose the KH type-2 domain.

This sequence belongs to the universal ribosomal protein uS3 family. Part of the 30S ribosomal subunit. Forms a tight complex with proteins S10 and S14.

Its function is as follows. Binds the lower part of the 30S subunit head. Binds mRNA in the 70S ribosome, positioning it for translation. This is Small ribosomal subunit protein uS3 from Rickettsia canadensis (strain McKiel).